Here is a 520-residue protein sequence, read N- to C-terminus: MKTDIHSQKILILDFGSQYTQLIARRVREAHVFCELHPFDMEMAAIRAFNPSGIILSGGPKSVYEPGAPAVAEELFELGVPVLGICYGMQLMSRHFGGEVVPAGKREFGHAELLCSGQPGQLFDGFFVGGASPVWMSHGDHVSRVPDGFQVVAYTENAPVCAIQDVSRNLYGVQFHPEVNHTPRGDQLIDTFVRAICGCTGHWTPGQIIEDAVTRIQEQVGSERVILGLSGGVDSSVAAALIHRAIGDQLTCVFVDNGLLRLEEGDQVMRTFAENLGVKVIRVNAEERFLSALAGESDPEKKRKIIGSLFVEIFDEESNRIEDARWLAQGTIYPDVIESAGAKTGKAHNIKSHHNVGGLPEYMKLKLLEPLRELFKDEVRAIGEELGLPHQMVWRHPFPGPGLAVRILGEVKKEYADILRRADAIFIEELYSSDHYHKISQAFAVFLPVKSVGVMGDGRTYEYVVALRAVETKDFMTASWYPLPYEDMARISARIINEVKGVNRVVYDISSKPPATIEWE.

Residues 9–202 enclose the Glutamine amidotransferase type-1 domain; the sequence is KILILDFGSQ…VRAICGCTGH (194 aa). C86 acts as the Nucleophile in catalysis. Catalysis depends on residues H176 and E178. The region spanning 203–395 is the GMPS ATP-PPase domain; that stretch reads WTPGQIIEDA…LGLPHQMVWR (193 aa). Position 230 to 236 (230 to 236) interacts with ATP; it reads SGGVDSS.

As to quaternary structure, homodimer.

The enzyme catalyses XMP + L-glutamine + ATP + H2O = GMP + L-glutamate + AMP + diphosphate + 2 H(+). Its pathway is purine metabolism; GMP biosynthesis; GMP from XMP (L-Gln route): step 1/1. Catalyzes the synthesis of GMP from XMP. In Pelobacter propionicus (strain DSM 2379 / NBRC 103807 / OttBd1), this protein is GMP synthase [glutamine-hydrolyzing].